The primary structure comprises 40 residues: Sulfur globule protein TR2 (40 aa).

This sequence to C.vinosum CV3. In terms of assembly, the protein envelope of the sulfur globules is composed of the three different proteins TR0, TR1 and TR2.

Functionally, structural protein of the sulfur globules, which are intracellular globules that serve for sulfur storage in purple sulfur bacteria. The polypeptide is Sulfur globule protein TR2 (Thiocapsa roseopersicina).